Here is a 283-residue protein sequence, read N- to C-terminus: 4-diphosphocytidyl-2-C-methyl-D-erythritol kinase (283 aa).

Lys13 is a catalytic residue. 96-106 is an ATP binding site; it reads PMGGGIGGGSS. Asp138 is a catalytic residue.

The protein belongs to the GHMP kinase family. IspE subfamily.

It carries out the reaction 4-CDP-2-C-methyl-D-erythritol + ATP = 4-CDP-2-C-methyl-D-erythritol 2-phosphate + ADP + H(+). Its pathway is isoprenoid biosynthesis; isopentenyl diphosphate biosynthesis via DXP pathway; isopentenyl diphosphate from 1-deoxy-D-xylulose 5-phosphate: step 3/6. Its function is as follows. Catalyzes the phosphorylation of the position 2 hydroxy group of 4-diphosphocytidyl-2C-methyl-D-erythritol. The polypeptide is 4-diphosphocytidyl-2-C-methyl-D-erythritol kinase (Pseudomonas fluorescens (strain SBW25)).